The sequence spans 146 residues: Globin (146 aa).

N-acetylalanine is present on A1. The 146-residue stretch at A1–S146 folds into the Globin domain. Heme b-binding residues include H65 and H97.

Belongs to the globin family. As to quaternary structure, homodimer.

The sequence is that of Globin from Buccinum undatum (Common whelk).